We begin with the raw amino-acid sequence, 694 residues long: Elongation factor G (694 aa).

The 280-residue stretch at 8–287 (EDYRNFGIMA…AVVEFLPAPT (280 aa)) folds into the tr-type G domain. Residues 17-24 (AHIDAGKT), 86-90 (DTPGH), and 140-143 (NKMD) contribute to the GTP site.

This sequence belongs to the TRAFAC class translation factor GTPase superfamily. Classic translation factor GTPase family. EF-G/EF-2 subfamily.

The protein resides in the cytoplasm. Its function is as follows. Catalyzes the GTP-dependent ribosomal translocation step during translation elongation. During this step, the ribosome changes from the pre-translocational (PRE) to the post-translocational (POST) state as the newly formed A-site-bound peptidyl-tRNA and P-site-bound deacylated tRNA move to the P and E sites, respectively. Catalyzes the coordinated movement of the two tRNA molecules, the mRNA and conformational changes in the ribosome. This is Elongation factor G from Brucella melitensis biotype 1 (strain ATCC 23456 / CCUG 17765 / NCTC 10094 / 16M).